The sequence spans 103 residues: Small ribosomal subunit protein uS14c (103 aa).

Residues 34–56 are disordered; sequence KVSPLSLSEKTKMQEKLQSLPRN.

This sequence belongs to the universal ribosomal protein uS14 family. In terms of assembly, part of the 30S ribosomal subunit.

The protein localises to the plastid. Its subcellular location is the chloroplast. Functionally, binds 16S rRNA, required for the assembly of 30S particles. The sequence is that of Small ribosomal subunit protein uS14c from Saccharum hybrid (Sugarcane).